Here is an 87-residue protein sequence, read N- to C-terminus: Small ribosomal subunit protein uS17 (87 aa).

Belongs to the universal ribosomal protein uS17 family. In terms of assembly, part of the 30S ribosomal subunit.

In terms of biological role, one of the primary rRNA binding proteins, it binds specifically to the 5'-end of 16S ribosomal RNA. The chain is Small ribosomal subunit protein uS17 from Onion yellows phytoplasma (strain OY-M).